The following is a 125-amino-acid chain: C-X-C motif chemokine 9 (125 aa).

A signal peptide spans 1–22 (MKKSGVLFLLGIILLVLIGVQG). Cystine bridges form between Cys31/Cys58 and Cys33/Cys74. The interval 93–125 (VSQKKKQKNGKKHQKKKVLKVRKSQRSRQKKTT) is disordered. Basic residues predominate over residues 94 to 125 (SQKKKQKNGKKHQKKKVLKVRKSQRSRQKKTT).

This sequence belongs to the intercrine alpha (chemokine CxC) family.

It is found in the secreted. Functionally, cytokine that affects the growth, movement, or activation state of cells that participate in immune and inflammatory response. Chemotactic for activated T-cells. Binds to CXCR3. This Homo sapiens (Human) protein is C-X-C motif chemokine 9 (CXCL9).